The primary structure comprises 105 residues: Large ribosomal subunit protein uL24 (105 aa).

The protein belongs to the universal ribosomal protein uL24 family. As to quaternary structure, part of the 50S ribosomal subunit.

In terms of biological role, one of two assembly initiator proteins, it binds directly to the 5'-end of the 23S rRNA, where it nucleates assembly of the 50S subunit. Functionally, one of the proteins that surrounds the polypeptide exit tunnel on the outside of the subunit. The protein is Large ribosomal subunit protein uL24 of Azoarcus sp. (strain BH72).